The chain runs to 215 residues: Probable septum site-determining protein MinC (215 aa).

It belongs to the MinC family. As to quaternary structure, interacts with MinD and FtsZ.

Functionally, cell division inhibitor that blocks the formation of polar Z ring septums. Rapidly oscillates between the poles of the cell to destabilize FtsZ filaments that have formed before they mature into polar Z rings. Prevents FtsZ polymerization. This is Probable septum site-determining protein MinC from Clostridium botulinum (strain Alaska E43 / Type E3).